The primary structure comprises 135 residues: MRPSSPSKDHYTQVPIKVQHRAAKRKRIRRKRVDLNCGCSYYVHINCHNHGFTHRGTHHCSSGDEWRLYLGGTKSPLFQDHSTRQQTVRNEPGHNNRPDTVQPQPEESVGTTSMLDGFQGLDDLTASDLAFLEGI.

A Nuclear localization signal motif is present at residues 17–32 (KVQHRAAKRKRIRRKR). A zinc finger lies at 37 to 54 (CGCSYYVHINCHNHGFTH). Positions 77 to 115 (LFQDHSTRQQTVRNEPGHNNRPDTVQPQPEESVGTTSML) are disordered. The segment covering 98–114 (PDTVQPQPEESVGTTSM) has biased composition (polar residues). Residues 120–135 (GLDDLTASDLAFLEGI) are transactivation.

This sequence belongs to the geminiviridae transcriptional activator protein family. In terms of assembly, monomer. Homodimer. Homooligomer. Self-interaction correlates with nuclear localization and efficient activation of transcription. Monomers suppress local silencing by interacting with and inactivating host adenosine kinase 2 (ADK2) in the cytoplasm. Interacts with and inhibits host SNF1 kinase. Binds to ssDNA. In terms of processing, phosphorylated.

The protein resides in the host nucleus. It localises to the host cytoplasm. In terms of biological role, strong activator of the late viral genes promoters. Enhances the expression of the capsid protein and nuclear shuttle protein. Acts as a suppressor of RNA-mediated gene silencing, also known as post-transcriptional gene silencing (PTGS), a mechanism of plant viral defense that limits the accumulation of viral RNAs. Suppresses the host RNA silencing by inhibiting adenosine kinase 2 (ADK2), a kinase involved in a general methylation pathway. Also suppresses the host basal defense by interacting with and inhibiting SNF1 kinase, a key regulator of cell metabolism implicated in innate antiviral defense. Determines pathogenicity. The polypeptide is Transcriptional activator protein (Indian cassava mosaic virus (ICMV)).